A 216-amino-acid polypeptide reads, in one-letter code: MAATNGDAELTVAEEAKEEEEATDDGGGGVSSQWLRAAVLGASDGLVSTAALMLGIGAARPADARAVLLSGLAGLVAGACSMAIGEYVSVHVQLDVELADLERRRRRGGPAPAGLGLHAAAAAVSRPGQAAAASALSFAAGAALPLLAAWFVAGAYRVRVVVVVATASLALAAFGAAGARLGRAPGGRAGLRVVVGGLLAMAATYGVMKLFRTHGV.

Residues 1-29 (MAATNGDAELTVAEEAKEEEEATDDGGGG) form a disordered region. Residues 1–36 (MAATNGDAELTVAEEAKEEEEATDDGGGGVSSQWLR) are Cytoplasmic-facing. A helical transmembrane segment spans residues 37–57 (AAVLGASDGLVSTAALMLGIG). The Vacuolar segment spans residues 58–65 (AARPADAR). The helical transmembrane segment at 66 to 86 (AVLLSGLAGLVAGACSMAIGE) threads the bilayer. Over 87 to 134 (YVSVHVQLDVELADLERRRRRGGPAPAGLGLHAAAAAVSRPGQAAAAS) the chain is Cytoplasmic. The helical transmembrane segment at 135 to 155 (ALSFAAGAALPLLAAWFVAGA) threads the bilayer. The Vacuolar segment spans residues 156–157 (YR). Residues 158–178 (VRVVVVVATASLALAAFGAAG) traverse the membrane as a helical segment. Over 179–190 (ARLGRAPGGRAG) the chain is Cytoplasmic. A helical membrane pass occupies residues 191–211 (LRVVVGGLLAMAATYGVMKLF). At 212 to 216 (RTHGV) the chain is on the vacuolar side.

The protein belongs to the CCC1 family.

The protein localises to the vacuole membrane. It catalyses the reaction Fe(2+)(in) = Fe(2+)(out). Probable vacuolar iron transporter that may be involved in the regulation of iron distribution throughout the plant. The sequence is that of Vacuolar iron transporter homolog 4 from Oryza sativa subsp. japonica (Rice).